The sequence spans 626 residues: MARIPEEVIDQVRNQADIVDIIGNYVQLKKQGRNYSGLCPFHGEKTPSFSVSPEKQIFHCFGCGKGGNVFSFLMEHDGLTFVESVKKVADMSHLDVAIELPEERDTSNLPKETSETAKMVEMHQLTAKLYHYILMETEEGTAALTYLKERGMSEQMMTTFQIGFAPNHHATITSFLEKRGMDLQLAGAAGLLSERDDGQMVDRFRNRIMFPITNDRGQIIAFSGRLFDRDDGPKYLNSPETPVFNKRRILFHFSEARQAIRKQEEITLMEGFMDVISAEEAGVQNAVASMGTSLTEEHADLIKRLTNRAIICYDGDRAGIEAAYKAGTLLVERNRLDVFVLQLPAGKDPDDFIRASGPEKFKEVYKQQRMTWTAFKIHYLRKERNLQNETEQIGYIDDCLREIAKLDQAVERELYLKQLADEFELTIETLKQQLQQSLKNSQKSRQMASYNEPPIDDSFMGMMPQEGAEMLFSFEQPAQKLSAHTISEQQLMKAMMESRDNFLLIKQLLGDTTFYHDNYEALYTYLIGYFAEGNDADPTKFMDSVPDAAMKGLISSLEMVISPDEQGKPQFEDYIRSLKRYKLEQKKKELEQELATYNRENDNENEIRVMLEIVQLNRQLNSGQLD.

A CHC2-type zinc finger spans residues 39–63 (CPFHGEKTPSFSVSPEKQIFHCFGC). The Toprim domain occupies 264–346 (EEITLMEGFM…DVFVLQLPAG (83 aa)). Mg(2+) contacts are provided by glutamate 270, aspartate 314, and aspartate 316.

The protein belongs to the DnaG primase family. Monomer. Interacts with DnaB. Requires Zn(2+) as cofactor. The cofactor is Mg(2+).

The catalysed reaction is ssDNA + n NTP = ssDNA/pppN(pN)n-1 hybrid + (n-1) diphosphate.. Functionally, RNA polymerase that catalyzes the synthesis of short RNA molecules used as primers for DNA polymerase during DNA replication. This chain is DNA primase, found in Listeria monocytogenes serovar 1/2a (strain ATCC BAA-679 / EGD-e).